The sequence spans 143 residues: Anti-sigma F factor (143 aa).

It belongs to the anti-sigma-factor family.

The enzyme catalyses L-seryl-[protein] + ATP = O-phospho-L-seryl-[protein] + ADP + H(+). It catalyses the reaction L-threonyl-[protein] + ATP = O-phospho-L-threonyl-[protein] + ADP + H(+). Binds to sigma F and blocks its ability to form an RNA polymerase holoenzyme (E-sigma F). Phosphorylates SpoIIAA on a serine residue. This phosphorylation may enable SpoIIAA to act as an anti-anti-sigma factor that counteracts SpoIIAB and thus releases sigma F from inhibition. The sequence is that of Anti-sigma F factor from Clostridium acetobutylicum (strain ATCC 824 / DSM 792 / JCM 1419 / IAM 19013 / LMG 5710 / NBRC 13948 / NRRL B-527 / VKM B-1787 / 2291 / W).